The primary structure comprises 160 residues: MMERFEKIEMKIPAKAEYVAIIRLTMAGVANRMGFAYDDIEDMKIAISEACTNIVQHAYKEDVGEITIVFGLYEDRLEIMAADNGVSFDFSSLKSKVGPYDINKPVEHLPENGLGLYLINTLMDDIQIMHDEGMTVLMTKYIQREQVENDGNPISTYNSY.

Belongs to the anti-sigma-factor family.

The catalysed reaction is L-seryl-[protein] + ATP = O-phospho-L-seryl-[protein] + ADP + H(+). The enzyme catalyses L-threonyl-[protein] + ATP = O-phospho-L-threonyl-[protein] + ADP + H(+). Negative regulator of sigma-B activity. Phosphorylates and inactivates its specific antagonist protein, RsbV. Upon phosphorylation of RsbV, RsbW is released and binds to sigma-B, thereby blocking its ability to form an RNA polymerase holoenzyme (E-sigma-B). The polypeptide is Serine-protein kinase RsbW (Bacillus cereus (strain G9842)).